Here is a 424-residue protein sequence, read N- to C-terminus: UDP-N-acetylglucosamine 1-carboxyvinyltransferase (424 aa).

Position 22 to 23 (22 to 23 (KN)) interacts with phosphoenolpyruvate. Arg93 is a binding site for UDP-N-acetyl-alpha-D-glucosamine. The active-site Proton donor is the Cys117. Position 117 is a 2-(S-cysteinyl)pyruvic acid O-phosphothioketal (Cys117). UDP-N-acetyl-alpha-D-glucosamine-binding positions include 162 to 165 (KVSV), Asp307, and Ile329.

Belongs to the EPSP synthase family. MurA subfamily.

Its subcellular location is the cytoplasm. The catalysed reaction is phosphoenolpyruvate + UDP-N-acetyl-alpha-D-glucosamine = UDP-N-acetyl-3-O-(1-carboxyvinyl)-alpha-D-glucosamine + phosphate. It participates in cell wall biogenesis; peptidoglycan biosynthesis. Its function is as follows. Cell wall formation. Adds enolpyruvyl to UDP-N-acetylglucosamine. This is UDP-N-acetylglucosamine 1-carboxyvinyltransferase from Actinobacillus pleuropneumoniae serotype 5b (strain L20).